The primary structure comprises 326 residues: Phospho-N-acetylmuramoyl-pentapeptide-transferase (326 aa).

Helical transmembrane passes span 3-23 (LPTKIFFTSFIFGFILSPYFI), 51-71 (TPTMGGVVILTSSLLPILFWV), 77-97 (ILLLVSITLSFALIGFIDDYL), 113-133 (ILIQFIVALVGMSVFKLYFTE), 143-163 (GIMIDFSYLYAPFAAFIVVGS), 175-195 (GLAATQIIASFVSLGLVAYMT), 199-219 (ISVILFCITFIGATLSFLWFN), 225-245 (IFMGDIGSLSIGAALGLTSVL), 250-270 (VLFAVIGVIFVIETLSVVIQV), and 306-326 (IVIKFLIITIVCSVFTVAFLL).

The protein belongs to the glycosyltransferase 4 family. MraY subfamily. Requires Mg(2+) as cofactor.

The protein localises to the cell membrane. It carries out the reaction UDP-N-acetyl-alpha-D-muramoyl-L-alanyl-gamma-D-glutamyl-meso-2,6-diaminopimeloyl-D-alanyl-D-alanine + di-trans,octa-cis-undecaprenyl phosphate = di-trans,octa-cis-undecaprenyl diphospho-N-acetyl-alpha-D-muramoyl-L-alanyl-D-glutamyl-meso-2,6-diaminopimeloyl-D-alanyl-D-alanine + UMP. The protein operates within cell wall biogenesis; peptidoglycan biosynthesis. In terms of biological role, catalyzes the initial step of the lipid cycle reactions in the biosynthesis of the cell wall peptidoglycan: transfers peptidoglycan precursor phospho-MurNAc-pentapeptide from UDP-MurNAc-pentapeptide onto the lipid carrier undecaprenyl phosphate, yielding undecaprenyl-pyrophosphoryl-MurNAc-pentapeptide, known as lipid I. This Wolbachia sp. subsp. Brugia malayi (strain TRS) protein is Phospho-N-acetylmuramoyl-pentapeptide-transferase.